A 367-amino-acid polypeptide reads, in one-letter code: Germination protease (367 aa).

Positions 1-15 are excised as a propeptide; the sequence is MKEPLDLSKYSVRTD.

This sequence belongs to the peptidase A25 family. In terms of assembly, homotetramer. In terms of processing, autoproteolytically processed. The inactive tetrameric zymogen termed p46 autoprocesses to a smaller form termed p41, which is active only during spore germination.

It carries out the reaction Endopeptidase action with P4 Glu or Asp, P1 preferably Glu &gt; Asp, P1' hydrophobic and P2' Ala.. Its function is as follows. Initiates the rapid degradation of small, acid-soluble proteins during spore germination. In Bacillus cereus (strain ATCC 10987 / NRS 248), this protein is Germination protease.